Reading from the N-terminus, the 199-residue chain is Peroxiredoxin-1 (199 aa).

S2 bears the N-acetylserine mark. In terms of domain architecture, Thioredoxin spans 6–165 (AKIGYPAPNF…IIRLVQAFQF (160 aa)). K7 carries the post-translational modification N6-acetyllysine; alternate. K7 participates in a covalent cross-link: Glycyl lysine isopeptide (Lys-Gly) (interchain with G-Cter in SUMO2); alternate. An N6-acetyllysine mark is found at K16 and K27. S32 is subject to Phosphoserine. Residue K35 is modified to N6-acetyllysine; alternate. K35 is subject to N6-succinyllysine; alternate. The Cysteine sulfenic acid (-SOH) intermediate role is filled by C52. T90 carries the post-translational modification Phosphothreonine. Residue K120 forms a Glycyl lysine isopeptide (Lys-Gly) (interchain with G-Cter in SUMO2) linkage. K136 is subject to N6-acetyllysine. A Glycyl lysine isopeptide (Lys-Gly) (interchain with G-Cter in SUMO1) cross-link involves residue K185. K197 is modified (N6-acetyllysine).

It belongs to the peroxiredoxin family. AhpC/Prx1 subfamily. In terms of assembly, homodimer; disulfide-linked, upon oxidation. 5 homodimers assemble to form a ring-like decamer. Interacts with GDPD5; forms a mixed-disulfide with GDPD5. Interacts with SESN1 and SESN2. Interacts with FAM107A. Post-translationally, phosphorylated on Thr-90 during the M-phase, which leads to a decrease in enzymatic activity. Acetylation increases reducing activity and resistance to superoxidation. Deacetylated by HDAC6 which decreases reducing activity. In terms of tissue distribution, found in various tissues; high concentration in liver.

It localises to the cytoplasm. The catalysed reaction is a hydroperoxide + [thioredoxin]-dithiol = an alcohol + [thioredoxin]-disulfide + H2O. Its function is as follows. Thiol-specific peroxidase that catalyzes the reduction of hydrogen peroxide and organic hydroperoxides to water and alcohols, respectively. Plays a role in cell protection against oxidative stress by detoxifying peroxides and as sensor of hydrogen peroxide-mediated signaling events. Might participate in the signaling cascades of growth factors and tumor necrosis factor-alpha by regulating the intracellular concentrations of H(2)O(2). Reduces an intramolecular disulfide bond in GDPD5 that gates the ability to GDPD5 to drive postmitotic motor neuron differentiation. In Mus musculus (Mouse), this protein is Peroxiredoxin-1 (Prdx1).